We begin with the raw amino-acid sequence, 70 residues long: DNA gyrase inhibitor YacG (70 aa).

Zn(2+)-binding residues include Cys21, Cys24, Cys36, and Cys40.

Belongs to the DNA gyrase inhibitor YacG family. In terms of assembly, interacts with GyrB. It depends on Zn(2+) as a cofactor.

Inhibits all the catalytic activities of DNA gyrase by preventing its interaction with DNA. Acts by binding directly to the C-terminal domain of GyrB, which probably disrupts DNA binding by the gyrase. The chain is DNA gyrase inhibitor YacG from Sinorhizobium medicae (strain WSM419) (Ensifer medicae).